The following is a 596-amino-acid chain: Polyphenol oxidase B, chloroplastic (596 aa).

The tract at residues 1-23 (MASVVCNSSSSTTTTTLKTPFTS) is disordered. The N-terminal 87 residues, 1-87 (MASVVCNSSS…ANAIPLAASA (87 aa)), are a transit peptide targeting the chloroplast. A compositionally biased stretch (low complexity) spans 8-23 (SSSSTTTTTLKTPFTS). 2 disulfides stabilise this stretch: Cys-98–Cys-114 and Cys-113–Cys-182. Positions 181, 199, 208, 329, 333, and 371 each coordinate Cu cation. The segment at residues 185 to 199 (CNGAYIIGGKELQVH) is a cross-link (2'-(S-cysteinyl)-histidine (Cys-His)).

It belongs to the tyrosinase family. Cu(2+) serves as cofactor.

The protein resides in the plastid. It is found in the chloroplast thylakoid lumen. It catalyses the reaction 2 catechol + O2 = 2 1,2-benzoquinone + 2 H2O. In terms of biological role, catalyzes the oxidation of mono- and o-diphenols to o-diquinones. This Solanum lycopersicum (Tomato) protein is Polyphenol oxidase B, chloroplastic.